A 247-amino-acid polypeptide reads, in one-letter code: Probable transcriptional regulatory protein Dvul_0986 (247 aa).

The interval 1–22 (MAGHSKWANIQHRKGRQDAKRG) is disordered.

Belongs to the TACO1 family.

The protein localises to the cytoplasm. This is Probable transcriptional regulatory protein Dvul_0986 from Nitratidesulfovibrio vulgaris (strain DP4) (Desulfovibrio vulgaris).